We begin with the raw amino-acid sequence, 585 residues long: MIKTIKADLKNKIQKTIKELALSSNIKLDKINIVMQKPPKSEMGDLSILIFEFSKILKLSIPVITQEIIKQIGNEYKTKSMGPYLNIKFNRKEYIQNTIKKVNKEKENYGANNSLQNKKTIIEFSSPNTNKPLHVGHLRNDIIGESLSRILKASGSKVTKINLINDRGTHICKSMLAYKKFGNNITPEIAQKKGDHLIGDFYVKYNEYASQNSEIAENEIQQLLCQWEQGDEKTVQLWTKLNKWAIDGIKETYNTTNITFDKIYLESEIFKIGREVVINGLKEGLCYKREDGAICINIPTEKNNIDNQNFKQKVLLRANGTSIYLTQDLGNIVARKNEFDFDEMIYVVGSEQIHHFKTLFYVADKLGVTNENNLIHLSYGMVNLPEGKMKSREGNIIDADNLIHDLSQSTMLELKKRYENEQNLQKLALNISLGAIHYYLLKTAIHKDILFNKTESLSFTGNSGPYIQYVGARINSILDKYNNLNLANKNTNFDLLVNENEWEIIKIISEFEEYIIKASKDRNPSIIANYSYLLAKNFSTYYQDTKIIDKDNLELTHARIDLAKAVLQTIKNCMHLLNIPYIQKM.

The 'HIGH' region signature appears at 127-137 (PNTNKPLHVGH).

This sequence belongs to the class-I aminoacyl-tRNA synthetase family. As to quaternary structure, monomer.

The protein localises to the cytoplasm. The enzyme catalyses tRNA(Arg) + L-arginine + ATP = L-arginyl-tRNA(Arg) + AMP + diphosphate. This chain is Arginine--tRNA ligase, found in Borrelia duttonii (strain Ly).